The chain runs to 133 residues: uncharacterized protein (133 aa).

The first 23 residues, 1–23, serve as a signal peptide directing secretion; the sequence is MSRKIIPALTIFFGPILILTAIT. Residues 82 to 133 form a disordered region; that stretch reads ESIKNQNSLNKEKQQQQQQQQQQQQQQQQQQQQQQKPNTPPTPLTTPSTPKK. Low complexity predominate over residues 96 to 118; that stretch reads QQQQQQQQQQQQQQQQQQQQQKP.

Its subcellular location is the secreted. This is an uncharacterized protein from Dictyostelium discoideum (Social amoeba).